We begin with the raw amino-acid sequence, 753 residues long: Polyribonucleotide nucleotidyltransferase (753 aa).

The Mg(2+) site is built by Asp543 and Asp549. The KH domain occupies 609–668 (PRITTVKIPVAKIGELIGPKGKNINALTEETGANISIEDDGTVFISAADGASAEAAIEKI). An S1 motif domain is found at 680-749 (GERFLGTVVK…NRGKISLVPV (70 aa)).

Belongs to the polyribonucleotide nucleotidyltransferase family. It depends on Mg(2+) as a cofactor.

The protein localises to the cytoplasm. It carries out the reaction RNA(n+1) + phosphate = RNA(n) + a ribonucleoside 5'-diphosphate. Functionally, involved in mRNA degradation. Catalyzes the phosphorolysis of single-stranded polyribonucleotides processively in the 3'- to 5'-direction. The protein is Polyribonucleotide nucleotidyltransferase of Corynebacterium glutamicum (strain R).